Here is a 680-residue protein sequence, read N- to C-terminus: Multidrug resistance protein MdtO (680 aa).

9 helical membrane-spanning segments follow: residues 43-63 (VILI…AVLF), 75-95 (FVAI…FLIY), 100-120 (GEPL…MFLM), 125-145 (LGLV…MLDY), 155-175 (WCIV…VLWF), 399-419 (FGGA…VMPW), 423-443 (IVEL…IATS), 454-474 (MVVT…YDLV), and 480-500 (ALGI…VWPE).

The protein belongs to the MdtO family. In terms of assembly, could be part of a tripartite efflux system composed of MdtN, MdtO and MdtP.

The protein localises to the cell inner membrane. In terms of biological role, could be involved in resistance to puromycin, acriflavine and tetraphenylarsonium chloride. The polypeptide is Multidrug resistance protein MdtO (mdtO) (Shigella flexneri).